Consider the following 229-residue polypeptide: Ribonuclease S-6 (229 aa).

An N-terminal signal peptide occupies residues 1–27; sequence MGITGMIYMVPMVFSLIVLISCSSTMG. Gln36 contacts RNA. A disulfide bond links Cys42 and Cys49. His60 is a binding site for RNA. The active-site Proton donor is His60. Cys75 and Cys119 are oxidised to a cystine. N-linked (GlcNAc) asparagine glycans are attached at residues Asn77 and Asn87. RNA is bound by residues 98 to 99, Phe108, 111 to 112, and 115 to 116; these read NV, RQ, and KH. Gln112 is a catalytic residue. His116 (proton acceptor) is an active-site residue. Asn145 carries an N-linked (GlcNAc...) (high mannose) asparagine glycan. Disulfide bonds link Cys184–Cys222 and Cys199–Cys210. Residue Asn188 is glycosylated (N-linked (GlcNAc) asparagine; alternate). Asn188 and Asn203 each carry an N-linked (GlcNAc...) asparagine; alternate glycan.

It belongs to the RNase T2 family. In terms of processing, the N-glycans attached at Asn-188 and Asn-203 consist of either monosaccharide (GlcNAc) or disaccharide (GlcNAc-GlcNAc) that could not be distinguished.

The catalysed reaction is a ribonucleotidyl-ribonucleotide-RNA + H2O = a 3'-end 3'-phospho-ribonucleotide-RNA + a 5'-end dephospho-ribonucleoside-RNA + H(+). Self-incompatibility (SI) is the inherited ability of a flowering plant to prevent self-fertilization by discriminating between self and non-self pollen during pollination. In many species, self-incompatibility is controlled by the single, multiallelic locus S. The polypeptide is Ribonuclease S-6 (Pyrus pyrifolia (Chinese pear)).